Consider the following 1033-residue polypeptide: Lethal(2) giant larvae protein homolog SRO7 (1033 aa).

The tract at residues 16-45 is disordered; sequence SLKGQNSETPIENSKASFKSKNSKTSTISK. Residues 18-27 are compositionally biased toward polar residues; sequence KGQNSETPIE. Residues 28-45 are compositionally biased toward low complexity; it reads NSKASFKSKNSKTSTISK. 14 WD repeats span residues 81–114, 121–156, 161–197, 216–249, 274–309, 333–397, 405–440, 464–538, 552–631, 638–673, 685–736, 745–799, 804–851, and 865–888; these read IAAAFDFTQNLLAIATVTGEVHIYGQQQVEVVIK, IKEMRFVKGIYLVVINAKDTVYVLSLYSQKVLTTVF, ITSIDTDASLDWMLIGLQNGSMIVYDIDRDQLSSFKL, SIQWNPRDIGTVLISYEYVTLTYSLVENEIKQSF, VIQSLYHPNSLHIITIHEDNSLVFWDANSGHMIMAR, KISK…MKIF, IVNILPIPRQSPYFAGCHNPGLILLILGNGEIETML, ATTS…FEVN, DKIS…STAV, TSAINNSNIGFVGIAYAAGSLMLIDRRGPAIIYMEN, VTCI…DITN, KIDA…THKG, LAAT…MSEH, and SVLRNGDIAIRVSEFQASLFSTVK. Residues Ser-591 and Ser-602 each carry the phosphoserine modification. Residues 953 to 984 form a disordered region; that stretch reads SFSERSSDDNNANHPEHQYTKPTRKGRNSSYG.

The protein belongs to the WD repeat L(2)GL family. Interacts with MYO2 and SEC9.

Its subcellular location is the cytoplasm. It is found in the cell membrane. Acts as an allosteric regulator of polarized exocytosis by promoting the targeted fusion of vesicles with the plasma membrane. Coordinates the spatial and temporal nature of both Rab-dependent tethering and SNARE-dependent membrane fusion of exocytic vesicles with the plasma membrane. Required for targeting of the sodium pumping ATPase ENA1 to the Cell Surface, thus being involved in maintenance of ion homeostasis in cells exposed to NaCl stress. May be involved in the targeting of the myosin proteins to their intrinsic pathways. Multicopy suppressor of RHO3. May also participate in the maintenance of cell polarity and bud growth. This Saccharomyces cerevisiae (strain ATCC 204508 / S288c) (Baker's yeast) protein is Lethal(2) giant larvae protein homolog SRO7 (SRO7).